Consider the following 431-residue polypeptide: Glutamate--tRNA ligase 1 (431 aa).

The 'HIGH' region signature appears at 6–16 (PSPTGDMHIGN). Residues 235 to 239 (KMSKR) carry the 'KMSKS' region motif. Lys238 is an ATP binding site.

The protein belongs to the class-I aminoacyl-tRNA synthetase family. Glutamate--tRNA ligase type 1 subfamily. As to quaternary structure, monomer.

Its subcellular location is the cytoplasm. It carries out the reaction tRNA(Glu) + L-glutamate + ATP = L-glutamyl-tRNA(Glu) + AMP + diphosphate. Functionally, catalyzes the attachment of glutamate to tRNA(Glu) in a two-step reaction: glutamate is first activated by ATP to form Glu-AMP and then transferred to the acceptor end of tRNA(Glu). The chain is Glutamate--tRNA ligase 1 from Campylobacter jejuni (strain RM1221).